We begin with the raw amino-acid sequence, 75 residues long: MAAKPFFRRRKTDPFEGENAPKIDYKDTRLLQRYISERGKIVPSRITAVGAKNQRALAKAIKRARFLALLPYAVK.

Residues 1–11 (MAAKPFFRRRK) are compositionally biased toward basic residues. The disordered stretch occupies residues 1 to 21 (MAAKPFFRRRKTDPFEGENAP).

The protein belongs to the bacterial ribosomal protein bS18 family. As to quaternary structure, part of the 30S ribosomal subunit. Forms a tight heterodimer with protein bS6.

Binds as a heterodimer with protein bS6 to the central domain of the 16S rRNA, where it helps stabilize the platform of the 30S subunit. In Jannaschia sp. (strain CCS1), this protein is Small ribosomal subunit protein bS18.